Consider the following 356-residue polypeptide: Holliday junction branch migration complex subunit RuvB (356 aa).

Positions 13–201 (SSNLSRKTRL…FGITQRLNFY (189 aa)) are large ATPase domain (RuvB-L). Residues 15–35 (NLSRKTRLLDPTPSLEEGKVR) form a disordered region. ATP-binding positions include Leu40, Arg41, Gly82, Lys85, Thr86, Thr87, 148-150 (EDF), Arg191, Tyr201, and Arg238. A Mg(2+)-binding site is contributed by Thr86. The interval 202-273 (SISDLNRIIQ…LVDKSLTLHQ (72 aa)) is small ATPAse domain (RuvB-S). The head domain (RuvB-H) stretch occupies residues 276–356 (ECGLDQSDRR…NSCKNSPIIK (81 aa)). Residues Arg331 and Arg336 each contribute to the DNA site.

This sequence belongs to the RuvB family. Homohexamer. Forms an RuvA(8)-RuvB(12)-Holliday junction (HJ) complex. HJ DNA is sandwiched between 2 RuvA tetramers; dsDNA enters through RuvA and exits via RuvB. An RuvB hexamer assembles on each DNA strand where it exits the tetramer. Each RuvB hexamer is contacted by two RuvA subunits (via domain III) on 2 adjacent RuvB subunits; this complex drives branch migration. In the full resolvosome a probable DNA-RuvA(4)-RuvB(12)-RuvC(2) complex forms which resolves the HJ.

Its subcellular location is the cytoplasm. The catalysed reaction is ATP + H2O = ADP + phosphate + H(+). The RuvA-RuvB-RuvC complex processes Holliday junction (HJ) DNA during genetic recombination and DNA repair, while the RuvA-RuvB complex plays an important role in the rescue of blocked DNA replication forks via replication fork reversal (RFR). RuvA specifically binds to HJ cruciform DNA, conferring on it an open structure. The RuvB hexamer acts as an ATP-dependent pump, pulling dsDNA into and through the RuvAB complex. RuvB forms 2 homohexamers on either side of HJ DNA bound by 1 or 2 RuvA tetramers; 4 subunits per hexamer contact DNA at a time. Coordinated motions by a converter formed by DNA-disengaged RuvB subunits stimulates ATP hydrolysis and nucleotide exchange. Immobilization of the converter enables RuvB to convert the ATP-contained energy into a lever motion, pulling 2 nucleotides of DNA out of the RuvA tetramer per ATP hydrolyzed, thus driving DNA branch migration. The RuvB motors rotate together with the DNA substrate, which together with the progressing nucleotide cycle form the mechanistic basis for DNA recombination by continuous HJ branch migration. Branch migration allows RuvC to scan DNA until it finds its consensus sequence, where it cleaves and resolves cruciform DNA. This Prochlorococcus marinus (strain SARG / CCMP1375 / SS120) protein is Holliday junction branch migration complex subunit RuvB.